The sequence spans 320 residues: Cytochrome f (320 aa).

The N-terminal stretch at 1–35 (MENRNTFSWVKEQMTRSISVSIMIYVITQTSISNA) is a signal peptide. Positions 36, 56, 59, and 60 each coordinate heme. A helical membrane pass occupies residues 286-306 (VQGLLFFFASVILAQVFLVLK).

It belongs to the cytochrome f family. In terms of assembly, the 4 large subunits of the cytochrome b6-f complex are cytochrome b6, subunit IV (17 kDa polypeptide, petD), cytochrome f and the Rieske protein, while the 4 small subunits are PetG, PetL, PetM and PetN. The complex functions as a dimer. It depends on heme as a cofactor.

Its subcellular location is the plastid. It is found in the chloroplast thylakoid membrane. Component of the cytochrome b6-f complex, which mediates electron transfer between photosystem II (PSII) and photosystem I (PSI), cyclic electron flow around PSI, and state transitions. In Agrostis stolonifera (Creeping bentgrass), this protein is Cytochrome f.